The following is a 404-amino-acid chain: Tryptophan synthase beta chain (404 aa).

At K98 the chain carries N6-(pyridoxal phosphate)lysine.

The protein belongs to the TrpB family. Tetramer of two alpha and two beta chains. The cofactor is pyridoxal 5'-phosphate.

The catalysed reaction is (1S,2R)-1-C-(indol-3-yl)glycerol 3-phosphate + L-serine = D-glyceraldehyde 3-phosphate + L-tryptophan + H2O. It functions in the pathway amino-acid biosynthesis; L-tryptophan biosynthesis; L-tryptophan from chorismate: step 5/5. Functionally, the beta subunit is responsible for the synthesis of L-tryptophan from indole and L-serine. This Acidiphilium cryptum (strain JF-5) protein is Tryptophan synthase beta chain.